Consider the following 308-residue polypeptide: Ribosome maturation factor RimP (308 aa).

Disordered regions lie at residues 1 to 31, 94 to 113, and 249 to 308; these read MARAGESGRAGVRRSTAPSRRTGGARAAADA, EDIGTDGAGGTGGSGGAAGG, and DLDE…EMNR. Residues 17-31 show a composition bias toward low complexity; sequence APSRRTGGARAAADA. The span at 99–113 shows a compositional bias: gly residues; that stretch reads DGAGGTGGSGGAAGG. A compositionally biased stretch (acidic residues) spans 249–269; the sequence is DLDEGLEDDDGLEDEDDEDEY.

The protein belongs to the RimP family.

Its subcellular location is the cytoplasm. Functionally, required for maturation of 30S ribosomal subunits. The chain is Ribosome maturation factor RimP from Parafrankia sp. (strain EAN1pec).